Here is a 370-residue protein sequence, read N- to C-terminus: Flagellar P-ring protein (370 aa).

An N-terminal signal peptide occupies residues 1-28; it reads MTFFTRCFRRGALLFLLAVLLLPSPAQA.

The protein belongs to the FlgI family. In terms of assembly, the basal body constitutes a major portion of the flagellar organelle and consists of four rings (L,P,S, and M) mounted on a central rod.

It is found in the periplasm. It localises to the bacterial flagellum basal body. Assembles around the rod to form the L-ring and probably protects the motor/basal body from shearing forces during rotation. The chain is Flagellar P-ring protein from Oleidesulfovibrio alaskensis (strain ATCC BAA-1058 / DSM 17464 / G20) (Desulfovibrio alaskensis).